Consider the following 410-residue polypeptide: MTITKQTGQVTAVADGTVVTPEGFQAAGVNAGLRYSKNDLGVILCDVPASAAAVYTQSHFQAAPLKVTQASLAVEQKLQAVIVNRPCANACTGAQGLKDAYEMRELCAKQFGLALHHVAVASTGVIGEYLPMEKIRAGIKQLVPGVTMADAEAFQTAILTTDTVMKRACYQTTIDGKTVTVGGAAKGSGMIHPNMATMLAFITTDANVSSPVLHAALRSITDVSFNQITVDGDTSTNDMVVVMASGLAGNDELTPDHPDWENFYEALRKTCEDLAKQIAKDGEGATKLIEVRVRGAKTDEEAKKIAKQIVGSNLVKTAVYGADANWGRIIGAIGYSDAEVNPDNVDVAIGPMVMLKGSEPQPFSEEEAAAYLQQETVVIEVDLHIGDGVGVAWGCDLTYDYVKINASYRT.

6 residues coordinate substrate: Thr-160, Lys-186, Thr-197, Glu-283, Asn-405, and Thr-410. Residue Thr-197 is the Nucleophile of the active site.

Belongs to the ArgJ family. As to quaternary structure, heterotetramer of two alpha and two beta chains.

It localises to the cytoplasm. It catalyses the reaction N(2)-acetyl-L-ornithine + L-glutamate = N-acetyl-L-glutamate + L-ornithine. It carries out the reaction L-glutamate + acetyl-CoA = N-acetyl-L-glutamate + CoA + H(+). The protein operates within amino-acid biosynthesis; L-arginine biosynthesis; L-ornithine and N-acetyl-L-glutamate from L-glutamate and N(2)-acetyl-L-ornithine (cyclic): step 1/1. It participates in amino-acid biosynthesis; L-arginine biosynthesis; N(2)-acetyl-L-ornithine from L-glutamate: step 1/4. Competitively inhibited by L-ornithine. Catalyzes two activities which are involved in the cyclic version of arginine biosynthesis: the synthesis of N-acetylglutamate from glutamate and acetyl-CoA as the acetyl donor, and of ornithine by transacetylation between N(2)-acetylornithine and glutamate. The sequence is that of Arginine biosynthesis bifunctional protein ArgJ from Geobacillus stearothermophilus (Bacillus stearothermophilus).